Consider the following 189-residue polypeptide: Elongation factor P (189 aa).

K34 is modified (N6-(3,6-diaminohexanoyl)-5-hydroxylysine).

This sequence belongs to the elongation factor P family. May be beta-lysylated on the epsilon-amino group of Lys-34 by the combined action of EpmA and EpmB, and then hydroxylated on the C5 position of the same residue by EpmC (if this protein is present). Lysylation is critical for the stimulatory effect of EF-P on peptide-bond formation. The lysylation moiety may extend toward the peptidyltransferase center and stabilize the terminal 3-CCA end of the tRNA. Hydroxylation of the C5 position on Lys-34 may allow additional potential stabilizing hydrogen-bond interactions with the P-tRNA.

It localises to the cytoplasm. It functions in the pathway protein biosynthesis; polypeptide chain elongation. Involved in peptide bond synthesis. Alleviates ribosome stalling that occurs when 3 or more consecutive Pro residues or the sequence PPG is present in a protein, possibly by augmenting the peptidyl transferase activity of the ribosome. Modification of Lys-34 is required for alleviation. This Alcanivorax borkumensis (strain ATCC 700651 / DSM 11573 / NCIMB 13689 / SK2) protein is Elongation factor P.